Here is a 116-residue protein sequence, read N- to C-terminus: Iron-sulfur cluster insertion protein ErpA (116 aa).

C44, C108, and C110 together coordinate iron-sulfur cluster.

This sequence belongs to the HesB/IscA family. In terms of assembly, homodimer. Iron-sulfur cluster is required as a cofactor.

Required for insertion of 4Fe-4S clusters for at least IspG. This chain is Iron-sulfur cluster insertion protein ErpA, found in Aeromonas salmonicida (strain A449).